Here is a 399-residue protein sequence, read N- to C-terminus: Elongation factor Tu (399 aa).

Residues 10-204 (KPHVNIGTIG…AVDEAIPEPE (195 aa)) form the tr-type G domain. The segment at 19 to 26 (GHVDHGKT) is G1. 19-26 (GHVDHGKT) lines the GTP pocket. Mg(2+) is bound at residue threonine 26. The tract at residues 60-64 (GITIN) is G2. The tract at residues 81–84 (DCPG) is G3. Residues 81-85 (DCPGH) and 136-139 (NKCD) each bind GTP. The G4 stretch occupies residues 136-139 (NKCD). Residues 174-176 (SGL) form a G5 region.

Belongs to the TRAFAC class translation factor GTPase superfamily. Classic translation factor GTPase family. EF-Tu/EF-1A subfamily. Monomer.

Its subcellular location is the cytoplasm. The enzyme catalyses GTP + H2O = GDP + phosphate + H(+). Its function is as follows. GTP hydrolase that promotes the GTP-dependent binding of aminoacyl-tRNA to the A-site of ribosomes during protein biosynthesis. The polypeptide is Elongation factor Tu (Parasynechococcus marenigrum (strain WH8102)).